The following is a 469-amino-acid chain: Citrate synthase, mitochondrial (469 aa).

Residues 1–33 (MAPVMRLGSAALRSSIHLTSRQTAFTAARCYSS) constitute a mitochondrion transit peptide. H352 is a catalytic residue.

It belongs to the citrate synthase family.

The protein resides in the mitochondrion matrix. The enzyme catalyses oxaloacetate + acetyl-CoA + H2O = citrate + CoA + H(+). It functions in the pathway carbohydrate metabolism; tricarboxylic acid cycle; isocitrate from oxaloacetate: step 1/2. This is Citrate synthase, mitochondrial (cit-1) from Neurospora crassa (strain ATCC 24698 / 74-OR23-1A / CBS 708.71 / DSM 1257 / FGSC 987).